Reading from the N-terminus, the 108-residue chain is MASFTSFCVLFTFCLLLLAHQARSGERQYKTESRNGKCVGEDDQLHAPTEVWYNDNDCSEHTCVNDDTGYYEIIRRCTLIAYPDECHMINGTGPRYPQCCCKVTCELD.

A signal peptide spans 1-24 (MASFTSFCVLFTFCLLLLAHQARS).

This sequence belongs to the scoloptoxin-16 family. Post-translationally, contains 4 disulfide bonds. In terms of tissue distribution, expressed by the venom gland.

Its subcellular location is the secreted. The protein is U-scoloptoxin(16)-Er10a of Ethmostigmus rubripes (Giant centipede).